Consider the following 241-residue polypeptide: Phosphoadenosine 5'-phosphosulfate reductase (241 aa).

A disordered region spans residues 221 to 241 (GADPRSGRWRGKAKTECGLHA). The active-site Nucleophile; cysteine thiosulfonate intermediate is cysteine 237.

The protein belongs to the PAPS reductase family. CysH subfamily.

It localises to the cytoplasm. The catalysed reaction is [thioredoxin]-disulfide + sulfite + adenosine 3',5'-bisphosphate + 2 H(+) = [thioredoxin]-dithiol + 3'-phosphoadenylyl sulfate. Its pathway is sulfur metabolism; hydrogen sulfide biosynthesis; sulfite from sulfate: step 3/3. In terms of biological role, catalyzes the formation of sulfite from phosphoadenosine 5'-phosphosulfate (PAPS) using thioredoxin as an electron donor. The protein is Phosphoadenosine 5'-phosphosulfate reductase of Gloeobacter violaceus (strain ATCC 29082 / PCC 7421).